A 277-amino-acid polypeptide reads, in one-letter code: Probable diphthine methyl ester synthase (277 aa).

S-adenosyl-L-methionine-binding positions include Leu9, Asp89, Gly92, Ser117–Val118, Leu168, Leu227, and His252.

Belongs to the diphthine synthase family.

The enzyme catalyses 2-[(3S)-amino-3-carboxypropyl]-L-histidyl-[translation elongation factor 2] + 4 S-adenosyl-L-methionine = diphthine methyl ester-[translation elongation factor 2] + 4 S-adenosyl-L-homocysteine + 3 H(+). It functions in the pathway protein modification; peptidyl-diphthamide biosynthesis. In terms of biological role, S-adenosyl-L-methionine-dependent methyltransferase that catalyzes four methylations of the modified target histidine residue in translation elongation factor 2 (EF-2), to form an intermediate called diphthine methyl ester. The four successive methylation reactions represent the second step of diphthamide biosynthesis. This is Probable diphthine methyl ester synthase from Arabidopsis thaliana (Mouse-ear cress).